The following is a 41-amino-acid chain: Entericidin A (41 aa).

An N-terminal signal peptide occupies residues 1–18 (MMKRLIVLVLLASTLLTG). C19 carries N-palmitoyl cysteine lipidation. C19 is lipidated: S-diacylglycerol cysteine.

Belongs to the EcnA/EcnB lipoprotein family.

The protein resides in the cell membrane. Functionally, acts as antidote to the effect of entericidin B. This chain is Entericidin A (ecnA), found in Escherichia coli O157:H7.